Consider the following 904-residue polypeptide: Alanine--tRNA ligase (904 aa).

Zn(2+) is bound by residues histidine 603, histidine 607, cysteine 707, and histidine 711.

This sequence belongs to the class-II aminoacyl-tRNA synthetase family. Zn(2+) is required as a cofactor.

The protein resides in the cytoplasm. The catalysed reaction is tRNA(Ala) + L-alanine + ATP = L-alanyl-tRNA(Ala) + AMP + diphosphate. In terms of biological role, catalyzes the attachment of alanine to tRNA(Ala) in a two-step reaction: alanine is first activated by ATP to form Ala-AMP and then transferred to the acceptor end of tRNA(Ala). Also edits incorrectly charged Ser-tRNA(Ala) and Gly-tRNA(Ala) via its editing domain. In Sulfurisphaera tokodaii (strain DSM 16993 / JCM 10545 / NBRC 100140 / 7) (Sulfolobus tokodaii), this protein is Alanine--tRNA ligase.